Here is a 188-residue protein sequence, read N- to C-terminus: V-type proton ATPase subunit E (188 aa).

This sequence belongs to the V-ATPase E subunit family.

Functionally, produces ATP from ADP in the presence of a proton gradient across the membrane. This is V-type proton ATPase subunit E from Dictyoglomus turgidum (strain DSM 6724 / Z-1310).